Consider the following 311-residue polypeptide: Probable acetylxylan esterase A (311 aa).

A signal peptide spans 1–19; sequence MAPFSFILTVLLYALTCSA. S153 acts as the Charge relay system in catalysis. N-linked (GlcNAc...) asparagine glycans are attached at residues N197 and N224.

It belongs to the carbohydrate esterase 1 (CE1) family. AxeA subfamily. As to quaternary structure, monomer.

The protein localises to the secreted. The enzyme catalyses Deacetylation of xylans and xylo-oligosaccharides.. Its pathway is glycan degradation; xylan degradation. Its function is as follows. Acetylxylan esterase involved in the hydrolysis of xylan, a major structural heterogeneous polysaccharide found in plant biomass representing the second most abundant polysaccharide in the biosphere, after cellulose. Degrades acetylated xylans by cleaving acetyl side groups from the hetero-xylan backbone. This chain is Probable acetylxylan esterase A (axeA), found in Aspergillus terreus (strain NIH 2624 / FGSC A1156).